The sequence spans 957 residues: Glycine dehydrogenase (decarboxylating) (957 aa).

Lysine 708 carries the N6-(pyridoxal phosphate)lysine modification.

Belongs to the GcvP family. As to quaternary structure, the glycine cleavage system is composed of four proteins: P, T, L and H. Pyridoxal 5'-phosphate is required as a cofactor.

It catalyses the reaction N(6)-[(R)-lipoyl]-L-lysyl-[glycine-cleavage complex H protein] + glycine + H(+) = N(6)-[(R)-S(8)-aminomethyldihydrolipoyl]-L-lysyl-[glycine-cleavage complex H protein] + CO2. Functionally, the glycine cleavage system catalyzes the degradation of glycine. The P protein binds the alpha-amino group of glycine through its pyridoxal phosphate cofactor; CO(2) is released and the remaining methylamine moiety is then transferred to the lipoamide cofactor of the H protein. The polypeptide is Glycine dehydrogenase (decarboxylating) (Salmonella heidelberg (strain SL476)).